The chain runs to 195 residues: Ribonuclease HII (195 aa).

Positions 1-195 constitute an RNase H type-2 domain; that stretch reads MICGIDEAGR…SWRTLRYLNT (195 aa). A divalent metal cation-binding residues include Asp6, Glu7, and Asp101.

This sequence belongs to the RNase HII family. It depends on Mn(2+) as a cofactor. Requires Mg(2+) as cofactor.

The protein localises to the cytoplasm. The catalysed reaction is Endonucleolytic cleavage to 5'-phosphomonoester.. Functionally, endonuclease that specifically degrades the RNA of RNA-DNA hybrids. The chain is Ribonuclease HII from Pyrobaculum islandicum (strain DSM 4184 / JCM 9189 / GEO3).